A 538-amino-acid polypeptide reads, in one-letter code: L-aspartate oxidase (538 aa).

Residues 14–17, lysine 36, 43–50, and aspartate 223 each bind FAD; these read SGAA and STYWAQGG. Arginine 290 serves as the catalytic Proton donor/acceptor. FAD contacts are provided by residues glutamate 375 and 391–392; that span reads SL.

The protein belongs to the FAD-dependent oxidoreductase 2 family. NadB subfamily. FAD is required as a cofactor.

It is found in the cytoplasm. It catalyses the reaction L-aspartate + O2 = iminosuccinate + H2O2. Its pathway is cofactor biosynthesis; NAD(+) biosynthesis; iminoaspartate from L-aspartate (oxidase route): step 1/1. Its function is as follows. Catalyzes the oxidation of L-aspartate to iminoaspartate, the first step in the de novo biosynthesis of NAD(+). The polypeptide is L-aspartate oxidase (nadB) (Pseudomonas aeruginosa (strain ATCC 15692 / DSM 22644 / CIP 104116 / JCM 14847 / LMG 12228 / 1C / PRS 101 / PAO1)).